The primary structure comprises 147 residues: Large ribosomal subunit protein uL13 (147 aa).

The protein belongs to the universal ribosomal protein uL13 family. Part of the 50S ribosomal subunit.

In terms of biological role, this protein is one of the early assembly proteins of the 50S ribosomal subunit, although it is not seen to bind rRNA by itself. It is important during the early stages of 50S assembly. This is Large ribosomal subunit protein uL13 from Salinispora arenicola (strain CNS-205).